We begin with the raw amino-acid sequence, 270 residues long: UPF0246 protein PsycPRwf_0637 (270 aa).

The protein belongs to the UPF0246 family.

The polypeptide is UPF0246 protein PsycPRwf_0637 (Psychrobacter sp. (strain PRwf-1)).